The following is a 409-amino-acid chain: Probable sodium/metabolite cotransporter BASS6, chloroplastic (409 aa).

The transit peptide at 1 to 49 (MSVITTPIETLHLKSTLRLLPRAVYRSQRIQVFPPNIFSNTSLSSPLRI) directs the protein to the chloroplast. 9 helical membrane-spanning segments follow: residues 100 to 120 (ILPHVVLASTILALIYPPSFT), 121 to 141 (WFTSRYFVPALGFLMFAVGIN), 170 to 190 (VLGFIFGLAAVSLFQLPTPIG), 191 to 211 (AGIMLVSCVSGAQLSNYATFL), 221 to 241 (IVMTSLSTATAVLVTPMLSLL), 253 to 273 (GMISSILQVVIAPIAAGLLLN), 285 to 305 (PFLPILSVLDTACCVGAPLAL), 316 to 336 (ATILLLVTMFHLSAFLAGYFL), and 381 to 401 (IPPAISTVVMSLMGFTLVLIW).

This sequence belongs to the bile acid:sodium symporter (BASS) (TC 2.A.28) family.

The protein localises to the membrane. It localises to the plastid. The protein resides in the chloroplast envelope. Its function is as follows. May function as sodium-coupled metabolite transporter across the chloroplast envelope. This is Probable sodium/metabolite cotransporter BASS6, chloroplastic (BASS6) from Arabidopsis thaliana (Mouse-ear cress).